The following is a 487-amino-acid chain: MPAGHGQTAMTREQQPPRFTLNCWADAAMASTATTARPTVAFAHLGCEKNRVDTEHMLGLLAQAGYGVSADEADAQVVVVNTCSFIQDARAESVRTLVDLAEQGKQIVIAGCLAQHFQEELLESLPEARAIVGTGDYQHIVEVLEQVEAGERVNRVSQVPTFVADENLPRYRTTSEAVAYLKVAEGCDYRCAFCIIPKLRGDQRSRPIESIVAEAQQLAAQGVKELILISQITTNYGLDLYGKPQLAELLRALGEVEIPWIRVHYAYPTGLTPEVLAAYREVPNVLPYLDLPLQHSHPEVLRAMNRPWQEGVNGQLLQRIREQLPDAVLRTTFIVGYPGETEEQFEHLLEFVQEQRFDHVGVFCFSPEDGTPAADLPNAVPAEVAEARRGRLMEAQQAISAERNGAWVGRIVDVLVEQENPSSGELIGRCLRFAPDVDGEVRIRAGSHGAAASAGTMVPVRITAADIYDLEGEVVGAQEMVDAVRHS.

Residues 38–149 enclose the MTTase N-terminal domain; it reads PTVAFAHLGC…IVEVLEQVEA (112 aa). Residues Cys-47, Cys-83, Cys-112, Cys-187, Cys-191, and Cys-194 each contribute to the [4Fe-4S] cluster site. A Radical SAM core domain is found at 173 to 402; the sequence is TTSEAVAYLK…MEAQQAISAE (230 aa). The TRAM domain occupies 405 to 476; it reads GAWVGRIVDV…IYDLEGEVVG (72 aa).

This sequence belongs to the methylthiotransferase family. RimO subfamily. [4Fe-4S] cluster serves as cofactor.

It is found in the cytoplasm. It catalyses the reaction L-aspartate(89)-[ribosomal protein uS12]-hydrogen + (sulfur carrier)-SH + AH2 + 2 S-adenosyl-L-methionine = 3-methylsulfanyl-L-aspartate(89)-[ribosomal protein uS12]-hydrogen + (sulfur carrier)-H + 5'-deoxyadenosine + L-methionine + A + S-adenosyl-L-homocysteine + 2 H(+). Catalyzes the methylthiolation of an aspartic acid residue of ribosomal protein uS12. This is Ribosomal protein uS12 methylthiotransferase RimO from Synechococcus sp. (strain RCC307).